A 613-amino-acid chain; its full sequence is Zinc metalloproteinase-disintegrin-like MTP8 (613 aa).

An N-terminal signal peptide occupies residues 1–20; that stretch reads MIEVLLVTICFTVFPYQGSP. Positions 21 to 191 are excised as a propeptide; sequence IILESGNVND…DETIEKISQL (171 aa). A Peptidase M12B domain is found at 205 to 401; it reads KYIELYVVVD…VRPQCILNKP (197 aa). A Ca(2+)-binding site is contributed by E208. N282 carries an N-linked (GlcNAc...) asparagine glycan. D292 provides a ligand contact to Ca(2+). 3 disulfide bridges follow: C316-C396, C356-C380, and C358-C363. 3 residues coordinate Zn(2+): H341, H345, and H351. 7 residues coordinate Ca(2+): C396, N399, N414, F416, E418, E421, and D424. A Disintegrin domain is found at 409-495; the sequence is PPVCGNYFVE…KCPTDSFQRN (87 aa). Cystine bridges form between C412/C441, C423/C436, C425/C431, C435/C458, C449/C455, C454/C480, C467/C487, C474/C506, C499/C511, C518/C568, C533/C575, C543/C577, C546/C556, C563/C601, and C595/C606. N-linked (GlcNAc...) asparagine glycosylation is present at N437. The D/ECD-tripeptide motif lies at 473–475; sequence DCD. Residues D475, L476, E478, and D490 each contribute to the Ca(2+) site. N-linked (GlcNAc...) asparagine glycans are attached at residues N550 and N572.

This sequence belongs to the venom metalloproteinase (M12B) family. P-III subfamily. In terms of assembly, monomer. Requires Zn(2+) as cofactor. As to expression, expressed by the venom gland.

Its subcellular location is the secreted. In terms of biological role, snake venom zinc metalloproteinase that may impair hemostasis in the prey. This Drysdalia coronoides (White-lipped snake) protein is Zinc metalloproteinase-disintegrin-like MTP8.